Consider the following 64-residue polypeptide: Large ribosomal subunit protein uL30 (64 aa).

The tract at residues M1 to G22 is disordered.

This sequence belongs to the universal ribosomal protein uL30 family. Part of the 50S ribosomal subunit.

The chain is Large ribosomal subunit protein uL30 from Acidiphilium cryptum (strain JF-5).